The chain runs to 176 residues: Shikimate kinase (176 aa).

An ATP-binding site is contributed by 14 to 19; that stretch reads GAGKSS. Ser18 is a Mg(2+) binding site. 3 residues coordinate substrate: Asp36, Arg60, and Gly82. Residue Arg120 participates in ATP binding. Arg138 serves as a coordination point for substrate.

Belongs to the shikimate kinase family. In terms of assembly, monomer. It depends on Mg(2+) as a cofactor.

It localises to the cytoplasm. It catalyses the reaction shikimate + ATP = 3-phosphoshikimate + ADP + H(+). Its pathway is metabolic intermediate biosynthesis; chorismate biosynthesis; chorismate from D-erythrose 4-phosphate and phosphoenolpyruvate: step 5/7. Its function is as follows. Catalyzes the specific phosphorylation of the 3-hydroxyl group of shikimic acid using ATP as a cosubstrate. The sequence is that of Shikimate kinase from Dehalococcoides mccartyi (strain ATCC BAA-2266 / KCTC 15142 / 195) (Dehalococcoides ethenogenes (strain 195)).